We begin with the raw amino-acid sequence, 256 residues long: SPX domain-containing protein 1 (256 aa).

One can recognise an SPX domain in the interval 1–155 (MKFGKSLSNQ…GDLMRLPFIQ (155 aa)). The short motif at 30–46 (KRLKLIGSKTADRPVKR) is the Bipartite nuclear localization signal element.

As to quaternary structure, interacts with PHR1 in a highly Pi-dependent manner.

The protein resides in the nucleus. Functionally, plays a positive role in plant adaptation to phosphate starvation. Inhibits PHR1 DNA-binding activity in a Pi-dependent manner. The polypeptide is SPX domain-containing protein 1 (Arabidopsis thaliana (Mouse-ear cress)).